A 257-amino-acid chain; its full sequence is Thiazole synthase (257 aa).

The active-site Schiff-base intermediate with DXP is the Lys-97. Residues Gly-158, Ala-184 to Gly-185, and Asn-206 to Thr-207 contribute to the 1-deoxy-D-xylulose 5-phosphate site.

The protein belongs to the ThiG family. Homotetramer. Forms heterodimers with either ThiH or ThiS.

The protein resides in the cytoplasm. The enzyme catalyses [ThiS sulfur-carrier protein]-C-terminal-Gly-aminoethanethioate + 2-iminoacetate + 1-deoxy-D-xylulose 5-phosphate = [ThiS sulfur-carrier protein]-C-terminal Gly-Gly + 2-[(2R,5Z)-2-carboxy-4-methylthiazol-5(2H)-ylidene]ethyl phosphate + 2 H2O + H(+). The protein operates within cofactor biosynthesis; thiamine diphosphate biosynthesis. Catalyzes the rearrangement of 1-deoxy-D-xylulose 5-phosphate (DXP) to produce the thiazole phosphate moiety of thiamine. Sulfur is provided by the thiocarboxylate moiety of the carrier protein ThiS. In vitro, sulfur can be provided by H(2)S. The sequence is that of Thiazole synthase from Desulforamulus reducens (strain ATCC BAA-1160 / DSM 100696 / MI-1) (Desulfotomaculum reducens).